The following is a 293-amino-acid chain: Transcriptional regulator ICP22 homolog (293 aa).

Disordered regions lie at residues 1 to 49 (MPHG…QRID) and 175 to 293 (RFLE…SARR). A compositionally biased stretch (low complexity) spans 21 to 31 (TPSTSPLIPSL). Residues 190-210 (EECDVSGDESPSEEEEEDEAS) are compositionally biased toward acidic residues. A compositionally biased stretch (basic residues) spans 272–281 (AAKKRRKRQP). Residues 282-293 (PKGERPTKSARR) are compositionally biased toward basic and acidic residues.

Belongs to the herpesviridae ICP22 family.

The chain is Transcriptional regulator ICP22 homolog (IR4) from Equus caballus (Horse).